A 439-amino-acid chain; its full sequence is 26S proteasome regulatory subunit 4 (439 aa).

Disordered stretches follow at residues 1–48 (MGQN…AMKL) and 82–104 (ERLKPQDEKNEEERSKVDDLRGT). Composition is skewed to basic and acidic residues over residues 12–25 (GEKKDDKDKKKKYE) and 82–102 (ERLKPQDEKNEEERSKVDDLR). 225–232 (GPPGTGKT) serves as a coordination point for ATP.

It belongs to the AAA ATPase family. As to quaternary structure, interacts with PSMD5.

Its subcellular location is the cytoplasm. It is found in the nucleus. Functionally, the 26S proteasome is involved in the ATP-dependent degradation of ubiquitinated proteins. The regulatory (or ATPase) complex confers ATP dependency and substrate specificity to the 26S complex. This Drosophila melanogaster (Fruit fly) protein is 26S proteasome regulatory subunit 4 (Rpt2).